A 195-amino-acid polypeptide reads, in one-letter code: PAP fimbrial minor pilin protein (195 aa).

Positions 1–22 are cleaved as a signal peptide; sequence MRLRFSVPLFFFGCVFVHGVFA. Cys58 and Cys97 are joined by a disulfide.

This sequence belongs to the fimbrial protein family.

It is found in the secreted. The protein resides in the fimbrium. In terms of biological role, fimbriae (also called pili), polar filaments radiating from the surface of the bacterium to a length of 0.5-1.5 micrometers and numbering 100-300 per cell, enable bacteria to colonize the epithelium of specific host organs. Its function is as follows. PapH seems to anchor the pilus to the bacterial cell. In addition the stoichiometric relationship between PapH and PapA determines the pilus length. The chain is PAP fimbrial minor pilin protein (papH) from Escherichia coli.